A 1159-amino-acid chain; its full sequence is Anillin-like protein 1 (1159 aa).

Disordered regions lie at residues 43 to 81 (VASP…MKEN), 266 to 327 (QQVS…TKTT), 409 to 430 (KLKK…APVP), 549 to 608 (AIPK…GDVI), and 629 to 699 (FGFM…KSSS). A compositionally biased stretch (polar residues) spans 50–60 (FGSSSKCNDGP). Low complexity predominate over residues 287–327 (ASSATSSSSSTTTLTTISGASGSTTSGISNAPQDSASTKTT). A compositionally biased stretch (pro residues) spans 421-430 (PPAPTSAPVP). Polar residues predominate over residues 564–584 (SASSLYSQGARSNTASPASKS). Acidic residues predominate over residues 660–684 (VIEEETENEDESEPYEPEEEEDDDA). Positions 1029 to 1147 (DITYHGFLSM…WLSLINSTSK (119 aa)) constitute a PH domain.

Strongly expressed in dividing neuroblasts under the ventral epidermal cells during ventral enclosure.

The protein localises to the cytoplasm. The protein resides in the cell cortex. It is found in the cytoskeleton. It localises to the spindle. Its subcellular location is the midbody. The protein localises to the cleavage furrow. Its function is as follows. Required for contractile events in embryos that occur prior to mitosis, such as cortical ruffling and pseudocleavage. Promotes membrane ruffling by organizing cortical patches of septins and myosin II. Not generally required for cytokinesis in mitotic cells. Required for the asymmetric cleavage events that extrude the two polar bodies during oocyte meiosis. Not required for meiotic contractile ring assembly, initiation or closure but is required for the transformation of the contractile ring from a disk above the spindle to a tube around the spindle midzone. Promotes astral microtubule-directed cortical myosin polarization and cleavage furrow ingression. Regulates neuroblast cytokinesis during mid- to late-embryogenesis and is required for ventral enclosure. The sequence is that of Anillin-like protein 1 (ani-1) from Caenorhabditis elegans.